Reading from the N-terminus, the 317-residue chain is Taste receptor type 2 member 14 (317 aa).

The Extracellular portion of the chain corresponds to methionine 1 to serine 7. The chain crosses the membrane as a helical span at residues isoleucine 8–alanine 28. Topologically, residues leucine 29–lysine 55 are cytoplasmic. The helical transmembrane segment at isoleucine 56–phenylalanine 76 threads the bilayer. Residues alanine 77–asparagine 87 lie on the Extracellular side of the membrane. Cholesterol contacts are provided by threonine 86 and tryptophan 89. A helical transmembrane segment spans residues isoleucine 88 to phenylalanine 108. Over leucine 109 to valine 129 the chain is Cytoplasmic. A helical transmembrane segment spans residues valine 130–isoleucine 150. The Extracellular segment spans residues histidine 151–threonine 184. 3 N-linked (GlcNAc...) asparagine glycosylation sites follow: asparagine 153, asparagine 162, and asparagine 171. Valine 180 is a cholesterol binding site. Residues valine 185–methionine 205 traverse the membrane as a helical segment. Residues tryptophan 206 to serine 232 are Cytoplasmic-facing. A helical membrane pass occupies residues methionine 233–threonine 253. Over serine 254–leucine 261 the chain is Extracellular. The chain crosses the membrane as a helical span at residues isoleucine 262–leucine 282. Positions 265 and 268 each coordinate cholesterol. Topologically, residues glycine 283–serine 317 are cytoplasmic.

The protein belongs to the G-protein coupled receptor T2R family. As to quaternary structure, core component of the TAS2R14-GNAI1 complex, consisting of TAS2R14, GNAI1, GNB1 and GNG2; within the complex interacts with GNAI1. Core component of the TAS2R14-GNAT3 complex, consisting of TAS2R14, GNAT3, GNB1 and GNG2; within the complex interacts with GNAT3. Core component of the TAS2R14-GNAS2 complex, consisting of TAS2R14, GNAS2, GNB1 and GNG2; within the complex interacts with GNAS2.

Its subcellular location is the membrane. The catalysed reaction is Ca(2+)(in) = Ca(2+)(out). It carries out the reaction 3',5'-cyclic AMP(in) = 3',5'-cyclic AMP(out). Its activity is regulated as follows. Basal activity is enhanced by binding to bitter tastants, such as flufenamic acid and aristolochic acid. Regulated by cholesterol in a concentration-dependent manner. In terms of biological role, gustducin-linked G-protein coupled receptor that plays a role in the perception of bitterness. The activity of this receptor stimulates GNAT3, activating the gustducin G-protein pathway. Likely plays a role in sensing the chemical composition of the gastrointestinal content and other extra-oral tissues via the inhibitory G-protein pathways. The protein is Taste receptor type 2 member 14 (TAS2R14) of Pan paniscus (Pygmy chimpanzee).